The chain runs to 231 residues: Probable transglycosylase SceD (231 aa).

A signal peptide spans 1-27 (MKKTLLASSLAVGLGIVAGNAGHEAHA). The span at 93–116 (SAQAPATNNVEPSAVQANQVQSQE) shows a compositional bias: polar residues. A disordered region spans residues 93 to 152 (SAQAPATNNVEPSAVQANQVQSQEVEAPQNAQTQQPQASTSNNSQVTATPTESKASEGSS). The segment covering 119–137 (APQNAQTQQPQASTSNNSQ) has biased composition (low complexity). Over residues 138-152 (VTATPTESKASEGSS) the composition is skewed to polar residues.

It belongs to the transglycosylase family. SceD subfamily.

It is found in the secreted. Its function is as follows. Is able to cleave peptidoglycan and affects clumping and separation of bacterial cells. In Staphylococcus aureus (strain Mu3 / ATCC 700698), this protein is Probable transglycosylase SceD (sceD).